A 409-amino-acid polypeptide reads, in one-letter code: 3-isopropylmalate dehydrogenase 1, chloroplastic (409 aa).

The transit peptide at 1-37 (MAAFLQTNISLNAIKIVPGKYSSLTDHQFRAPYRIRC) directs the protein to the chloroplast. Ser74 is subject to Phosphoserine. NAD(+) is bound at residue 118-133 (IGGYKWDKNEKHLRPE). Residues Arg140, Arg150, and Arg178 each coordinate substrate. Residue Asn238 participates in NAD(+) binding. Asp268 is a substrate binding site. Position 268 (Asp268) interacts with Mg(2+). Asn269 provides a ligand contact to NAD(+). Mg(2+) contacts are provided by Asp292 and Asp296. 322–338 (EPIHGSAPDIAGQDKAN) is a binding site for NAD(+).

The protein belongs to the isocitrate and isopropylmalate dehydrogenases family. Homodimer. Mg(2+) serves as cofactor. The cofactor is Mn(2+). In terms of tissue distribution, highly expressed in seedlings, leaves, stems and roots and, to a lower extent, in flowers, pollen and siliques.

The protein localises to the plastid. The protein resides in the chloroplast stroma. It carries out the reaction (2R,3S)-3-isopropylmalate + NAD(+) = 4-methyl-2-oxopentanoate + CO2 + NADH. It functions in the pathway amino-acid biosynthesis; L-leucine biosynthesis; L-leucine from 3-methyl-2-oxobutanoate: step 3/4. It participates in secondary metabolite biosynthesis. Its activity is regulated as follows. Regulated by a thiol-based redox modification; oxidation by CuCl(2) leads to a decreased activity. In terms of biological role, involved in both glucosinolate and leucine biosynthesis; catalyzes the oxidative decarboxylation step in both leucine biosynthesis (primary metabolism) and methionine chain elongation of glucosinolates (specialized metabolism). Catalyzes the oxidation of 3-carboxy-2-hydroxy-4-methylpentanoate (3-isopropylmalate, 3-IPM) to 3-carboxy-4-methyl-2-oxopentanoate. The product decarboxylates to 4-methyl-2 oxopentanoate. Required during pollen development and involved in embryo sac development. More active on 3-isopropylmalate and NAD(+) than towards D-malate. In Arabidopsis thaliana (Mouse-ear cress), this protein is 3-isopropylmalate dehydrogenase 1, chloroplastic.